A 107-amino-acid chain; its full sequence is UPF0235 protein RPC_0058 (107 aa).

It belongs to the UPF0235 family.

The chain is UPF0235 protein RPC_0058 from Rhodopseudomonas palustris (strain BisB18).